Here is a 197-residue protein sequence, read N- to C-terminus: Guanylate kinase (197 aa).

In terms of domain architecture, Guanylate kinase-like spans 10 to 187; that stretch reads GSLFIVSAPA…AYQVLRSILI (178 aa). 17–24 lines the ATP pocket; the sequence is APAGTGKT.

It belongs to the guanylate kinase family.

It is found in the cytoplasm. The catalysed reaction is GMP + ATP = GDP + ADP. In terms of biological role, essential for recycling GMP and indirectly, cGMP. The chain is Guanylate kinase from Protochlamydia amoebophila (strain UWE25).